The chain runs to 197 residues: Scoloptoxin SSD20 (197 aa).

Residues 1-6 (PPMTTE) form the signal peptide.

As to expression, expressed by the venom gland.

Its subcellular location is the secreted. Functionally, may act as a voltage-gated potassium channel inhibitor. Is highly similar to the subunit beta of SSD14 which, when complexed with subunit alpha, induces platelet aggregation and hemolysis. The chain is Scoloptoxin SSD20 from Scolopendra dehaani (Thai centipede).